The following is a 381-amino-acid chain: Chorismate synthase (381 aa).

Residues Arg41 and Arg47 each contribute to the NADP(+) site. Residues 127–129 (RAS), 247–248 (QA), Gly291, 306–310 (KPIPT), and Arg332 contribute to the FMN site.

The protein belongs to the chorismate synthase family. Homotetramer. FMNH2 is required as a cofactor.

The catalysed reaction is 5-O-(1-carboxyvinyl)-3-phosphoshikimate = chorismate + phosphate. The protein operates within metabolic intermediate biosynthesis; chorismate biosynthesis; chorismate from D-erythrose 4-phosphate and phosphoenolpyruvate: step 7/7. In terms of biological role, catalyzes the anti-1,4-elimination of the C-3 phosphate and the C-6 proR hydrogen from 5-enolpyruvylshikimate-3-phosphate (EPSP) to yield chorismate, which is the branch point compound that serves as the starting substrate for the three terminal pathways of aromatic amino acid biosynthesis. This reaction introduces a second double bond into the aromatic ring system. This chain is Chorismate synthase, found in Anaeromyxobacter sp. (strain K).